Here is a 306-residue protein sequence, read N- to C-terminus: Dermonecrotic toxin LiSicTox-alphaIA1bi (306 aa).

Residues 1 to 18 (MLPYIVLVLGCWSVLSQA) form the signal peptide. A propeptide spanning residues 19–26 (AQTDDEER) is cleaved from the precursor. H38 is a catalytic residue. Residues E58 and D60 each coordinate Mg(2+). H74 (nucleophile) is an active-site residue. 2 cysteine pairs are disulfide-bonded: C78/C84 and C80/C223. Position 118 (D118) interacts with Mg(2+).

This sequence belongs to the arthropod phospholipase D family. Class II subfamily. Class IIa sub-subfamily. Mg(2+) serves as cofactor. As to expression, expressed by the venom gland.

Its subcellular location is the secreted. It carries out the reaction an N-(acyl)-sphingosylphosphocholine = an N-(acyl)-sphingosyl-1,3-cyclic phosphate + choline. It catalyses the reaction an N-(acyl)-sphingosylphosphoethanolamine = an N-(acyl)-sphingosyl-1,3-cyclic phosphate + ethanolamine. The catalysed reaction is a 1-acyl-sn-glycero-3-phosphocholine = a 1-acyl-sn-glycero-2,3-cyclic phosphate + choline. The enzyme catalyses a 1-acyl-sn-glycero-3-phosphoethanolamine = a 1-acyl-sn-glycero-2,3-cyclic phosphate + ethanolamine. Dermonecrotic toxins cleave the phosphodiester linkage between the phosphate and headgroup of certain phospholipids (sphingolipid and lysolipid substrates), forming an alcohol (often choline) and a cyclic phosphate. This toxin acts on sphingomyelin (SM). The level of enzymatic activity is high according to Tambourgi and colleagues or low according to Felicori and colleagues. It may also act on ceramide phosphoethanolamine (CPE), lysophosphatidylcholine (LPC) and lysophosphatidylethanolamine (LPE), but not on lysophosphatidylserine (LPS), and lysophosphatidylglycerol (LPG). It acts by transphosphatidylation, releasing exclusively cyclic phosphate products as second products. It induces complement-dependent hemolysis, dermonecrosis, vascular permeability and platelet aggregation. Both C5a and the membrane attack complex may play a role in the induction of dermonecrosis. MMP-9 and MMP-2 produced by skin fibroblasts can also contribute to proteolytic tissue destruction. The sequence is that of Dermonecrotic toxin LiSicTox-alphaIA1bi from Loxosceles intermedia (Brown spider).